The primary structure comprises 277 residues: 3-methyl-2-oxobutanoate hydroxymethyltransferase (277 aa).

Mg(2+) is bound by residues D43 and D82. 3-methyl-2-oxobutanoate contacts are provided by residues 43 to 44, D82, and K112; that span reads DS. A Mg(2+)-binding site is contributed by E114. Residue E181 is the Proton acceptor of the active site.

The protein belongs to the PanB family. Homodecamer; pentamer of dimers. The cofactor is Mg(2+).

It localises to the cytoplasm. It catalyses the reaction 3-methyl-2-oxobutanoate + (6R)-5,10-methylene-5,6,7,8-tetrahydrofolate + H2O = 2-dehydropantoate + (6S)-5,6,7,8-tetrahydrofolate. The protein operates within cofactor biosynthesis; (R)-pantothenate biosynthesis; (R)-pantoate from 3-methyl-2-oxobutanoate: step 1/2. Its function is as follows. Catalyzes the reversible reaction in which hydroxymethyl group from 5,10-methylenetetrahydrofolate is transferred onto alpha-ketoisovalerate to form ketopantoate. The chain is 3-methyl-2-oxobutanoate hydroxymethyltransferase from Listeria monocytogenes serotype 4a (strain HCC23).